Here is a 426-residue protein sequence, read N- to C-terminus: Protein CgeD (426 aa).

This sequence to B.subtilis spore coat polysaccharide biosynthesis protein SpsA.

In terms of biological role, may be involved in maturation of the outermost layer of the spore. The protein is Protein CgeD (cgeD) of Bacillus subtilis (strain 168).